Consider the following 244-residue polypeptide: tRNA (guanine-N(1)-)-methyltransferase (244 aa).

S-adenosyl-L-methionine is bound by residues glycine 110 and 129-134; that span reads IGDYIL.

Belongs to the RNA methyltransferase TrmD family. As to quaternary structure, homodimer.

It is found in the cytoplasm. The enzyme catalyses guanosine(37) in tRNA + S-adenosyl-L-methionine = N(1)-methylguanosine(37) in tRNA + S-adenosyl-L-homocysteine + H(+). Specifically methylates guanosine-37 in various tRNAs. The polypeptide is tRNA (guanine-N(1)-)-methyltransferase (Syntrophomonas wolfei subsp. wolfei (strain DSM 2245B / Goettingen)).